We begin with the raw amino-acid sequence, 311 residues long: Malate dehydrogenase (311 aa).

NAD(+)-binding positions include 7–13 (GAAGGIG) and aspartate 34. Substrate is bound by residues arginine 81 and arginine 87. NAD(+) contacts are provided by residues asparagine 94 and 117-119 (ITN). Residues asparagine 119 and arginine 153 each coordinate substrate. Residue histidine 177 is the Proton acceptor of the active site. Methionine 227 is a binding site for NAD(+).

The protein belongs to the LDH/MDH superfamily. MDH type 1 family. In terms of assembly, homodimer.

It carries out the reaction (S)-malate + NAD(+) = oxaloacetate + NADH + H(+). Its function is as follows. Catalyzes the reversible oxidation of malate to oxaloacetate. This Shewanella sp. (strain MR-4) protein is Malate dehydrogenase.